Reading from the N-terminus, the 257-residue chain is Nuclear receptor subfamily 0 group B member 2 (257 aa).

Positions 16–257 (SRPAILYALL…GLLGDMLLLR (242 aa)) constitute an NR LBD domain. Position 57 is a symmetric dimethylarginine; by PRMT5 (Arg57).

It belongs to the nuclear hormone receptor family. NR0 subfamily. Interacts (via N-terminus) with NEUROD1 (via N-terminus and C-terminus). Interacts with ID2. Interacts with RORG, NFIL3, NR1D1 and BHLHE41. Heterodimer; efficient DNA binding requires dimerization with another bHLH protein. Interacts with RARA, RXRA, THRB, NR5A1, NR5A2, NR1I3, PPARA, PPARG and EID1. Interacts with HNF4A; the resulting heterodimer is transcriptionally inactive. Interacts with DDX3X; this interaction disrupts the interaction between HNF4 and NR0B2/SHP that forms inactive heterodimers and enhances the formation of active HNF4 homodimers. Arginine methylation by PRMT5 enhances repression activity of metabolic genes in liver in response to bile acid signaling, by increasing interaction with cofactors. As to expression, liver. Low levels of expression were detected in heart and pancreas.

Its subcellular location is the nucleus. The protein localises to the cytoplasm. In terms of biological role, transcriptional regulator that acts as a negative regulator of receptor-dependent signaling pathways. Specifically inhibits transactivation of the nuclear receptor with which it interacts. Inhibits transcriptional activity of NEUROD1 on E-box-containing promoter by interfering with the coactivation function of the p300/CBP-mediated transcription complex for NEUROD1. Essential component of the liver circadian clock which via its interaction with NR1D1 and RORG regulates NPAS2-mediated hepatic lipid metabolism. Regulates the circadian expression of cytochrome P450 (CYP) enzymes. Represses: NR5A2 and HNF4A to down-regulate CYP2C38, NFLI3 to up-regulate CYP2A5, BHLHE41/HNF1A axis to up-regulate CYP1A2, CYP2E1 and CYP3A11, and NR1D1 to up-regulate CYP2B10, CYP4A10 and CYP4A14. The protein is Nuclear receptor subfamily 0 group B member 2 (NR0B2) of Homo sapiens (Human).